The following is a 690-amino-acid chain: DNA topoisomerase 1 (690 aa).

A Toprim domain is found at 3 to 121 (DYLVIVESPA…EITKQAIKDA (119 aa)). The Mg(2+) site is built by Glu-9 and Asp-82. The Topo IA-type catalytic domain maps to 129 to 558 (NMDLVDAQQA…DFYKGFEERL (430 aa)). Residues 163 to 168 (SAGRVQ) are interaction with DNA. Tyr-298 serves as the catalytic O-(5'-phospho-DNA)-tyrosine intermediate. A disordered region spans residues 329–354 (NGTKAVKKDKKSQDAHEAIRPTSVER). The span at 339–354 (KSQDAHEAIRPTSVER) shows a compositional bias: basic and acidic residues. 3 consecutive C4-type zinc fingers follow at residues 579 to 605 (CEKC…FPDC), 619 to 647 (CPKC…YPEC), and 660 to 683 (CPKC…CSSC).

This sequence belongs to the type IA topoisomerase family. As to quaternary structure, monomer. Requires Mg(2+) as cofactor.

The enzyme catalyses ATP-independent breakage of single-stranded DNA, followed by passage and rejoining.. Its function is as follows. Releases the supercoiling and torsional tension of DNA, which is introduced during the DNA replication and transcription, by transiently cleaving and rejoining one strand of the DNA duplex. Introduces a single-strand break via transesterification at a target site in duplex DNA. The scissile phosphodiester is attacked by the catalytic tyrosine of the enzyme, resulting in the formation of a DNA-(5'-phosphotyrosyl)-enzyme intermediate and the expulsion of a 3'-OH DNA strand. The free DNA strand then undergoes passage around the unbroken strand, thus removing DNA supercoils. Finally, in the religation step, the DNA 3'-OH attacks the covalent intermediate to expel the active-site tyrosine and restore the DNA phosphodiester backbone. The protein is DNA topoisomerase 1 of Halalkalibacterium halodurans (strain ATCC BAA-125 / DSM 18197 / FERM 7344 / JCM 9153 / C-125) (Bacillus halodurans).